A 594-amino-acid chain; its full sequence is UvrABC system protein C (594 aa).

Residues 13–99 (NSSGVYQYFD…IKQLKPKYNI (87 aa)) form the GIY-YIG domain. The region spanning 205–240 (DRLIKELELKMERLSSNLRFEEALIYRDRIAKIQKI) is the UVR domain.

The protein belongs to the UvrC family. As to quaternary structure, interacts with UvrB in an incision complex.

It localises to the cytoplasm. The UvrABC repair system catalyzes the recognition and processing of DNA lesions. UvrC both incises the 5' and 3' sides of the lesion. The N-terminal half is responsible for the 3' incision and the C-terminal half is responsible for the 5' incision. In Helicobacter pylori (strain G27), this protein is UvrABC system protein C.